Consider the following 445-residue polypeptide: Phosphoglucosamine mutase (445 aa).

Residue serine 102 is the Phosphoserine intermediate of the active site. Positions 102, 241, 243, and 245 each coordinate Mg(2+). Serine 102 is subject to Phosphoserine.

Belongs to the phosphohexose mutase family. Mg(2+) is required as a cofactor. Post-translationally, activated by phosphorylation.

It catalyses the reaction alpha-D-glucosamine 1-phosphate = D-glucosamine 6-phosphate. Its function is as follows. Catalyzes the conversion of glucosamine-6-phosphate to glucosamine-1-phosphate. The protein is Phosphoglucosamine mutase of Photorhabdus laumondii subsp. laumondii (strain DSM 15139 / CIP 105565 / TT01) (Photorhabdus luminescens subsp. laumondii).